The following is an 818-amino-acid chain: Glycerol-3-phosphate acyltransferase (818 aa).

Residues 305-310 (CHRSHM) carry the HXXXXD motif motif.

Belongs to the GPAT/DAPAT family.

Its subcellular location is the cell inner membrane. It carries out the reaction sn-glycerol 3-phosphate + an acyl-CoA = a 1-acyl-sn-glycero-3-phosphate + CoA. It functions in the pathway phospholipid metabolism; CDP-diacylglycerol biosynthesis; CDP-diacylglycerol from sn-glycerol 3-phosphate: step 1/3. This Edwardsiella ictaluri (strain 93-146) protein is Glycerol-3-phosphate acyltransferase.